Here is a 302-residue protein sequence, read N- to C-terminus: Glycine N-acyltransferase-like protein 1 (302 aa).

The protein belongs to the glycine N-acyltransferase family. In terms of tissue distribution, expressed in liver and kidney and, at lower levels, in pancreas, testis, ovary and stomach.

It carries out the reaction an acyl-CoA + L-glutamine = an N(2)-acyl-L-glutamine + CoA + H(+). Its function is as follows. Acyltransferase which transfers an acyl group to the N-terminus of glutamine. Can use phenylacetyl-CoA as an acyl donor. The polypeptide is Glycine N-acyltransferase-like protein 1 (Homo sapiens (Human)).